The chain runs to 364 residues: Thebaine 6-O-demethylase (364 aa).

A Fe2OG dioxygenase domain is found at 214–314 (GTQAMRMNYY…RLSIATFHDP (101 aa)). Residue Y223 participates in 2-oxoglutarate binding. Positions 238, 240, and 295 each coordinate Fe cation. 2-oxoglutarate-binding residues include R305 and S307.

This sequence belongs to the iron/ascorbate-dependent oxidoreductase family. L-ascorbate is required as a cofactor. Requires Fe cation as cofactor. Mainly expressed in stems and leaves and, to a lower extent, in capsules and roots.

It carries out the reaction thebaine + 2-oxoglutarate + O2 = neopinone + formaldehyde + succinate + CO2. The enzyme catalyses oripavine + 2-oxoglutarate + O2 = neomorphinone + formaldehyde + succinate + CO2. It catalyses the reaction (S)-canadine + S-adenosyl-L-methionine = (S)-cis-N-methylcanadine + S-adenosyl-L-homocysteine. The catalysed reaction is thebaine + 2-oxoglutarate + O2 = 6-O-demethylthebaine + formaldehyde + succinate + CO2 + H(+). It functions in the pathway alkaloid biosynthesis; morphine biosynthesis. Moderate substrate inhibition. Not inhibited in vitro by acylcyclohexanediones. In terms of biological role, non-heme dioxygenase involved in biosynthesis of morphinan-type benzylisoquinoline and opiate alkaloids natural products. Mediates the conversion of thebaine to neopinone. Also catalyzes, with lower efficiency, the 6-O-demethylation of oripavine to neomorphinone, which is converted spontaneously to morphinone. Supports dealkylation reactions such as O,O-demethylenation in the metabolism of protopine, benzo[c]phenanthridine, and rhoeadine alkaloids; cleaves a methylenedioxy bridge leaving two hydroxyl groups. Catalyzes the O-demethylation of methylenedioxy bridges on protopine alkaloids such as allocryptopine. No activity with (S)-reticuline, salutaridine, papaverine, (S)-corytuberine, (S)-scoulerine, pavine, noscapine or codeine. The chain is Thebaine 6-O-demethylase from Papaver somniferum (Opium poppy).